Here is a 416-residue protein sequence, read N- to C-terminus: Histidine--tRNA ligase (416 aa).

Belongs to the class-II aminoacyl-tRNA synthetase family. As to quaternary structure, homodimer.

The protein resides in the cytoplasm. The enzyme catalyses tRNA(His) + L-histidine + ATP = L-histidyl-tRNA(His) + AMP + diphosphate + H(+). This Clostridium novyi (strain NT) protein is Histidine--tRNA ligase.